The chain runs to 466 residues: FERM domain-containing protein 8 (466 aa).

Methionine 1 carries the post-translational modification N-acetylmethionine. A disordered region spans residues 1–21; that stretch reads MEGAEGNAGQPGPAERSHRSS. Serine 24 is subject to Phosphoserine. The FERM domain occupies 30-377; that stretch reads ADVLVYLADD…YCIELSQAAE (348 aa). Positions 379–409 are disordered; it reads TLSQESASGPHEAPSPSPPPTQRPKLRRQGS. Residue serine 384 is modified to Phosphoserine. Over residues 391–400 the composition is skewed to pro residues; that stretch reads APSPSPPPTQ. Serine 409 is modified (phosphoserine). Position 420 is a phosphothreonine (threonine 420). Serine 440 and serine 447 each carry phosphoserine. Residues 442–460 are compositionally biased toward polar residues; that stretch reads FSRQLSSSQGSYTVVQPTD. Residues 442–466 form a disordered region; the sequence is FSRQLSSSQGSYTVVQPTDDSLEQS.

Interacts with iRhom proteins, including iRhom2/RHBDF2 (via cytoplasmic N-termini); this interaction leads to mutual protein stabilization. Interacts with LRP6; this interaction affects LRP6-binding to AXIN1. In terms of tissue distribution, widely expressed (at protein level).

Its subcellular location is the cytoplasm. The protein resides in the cytosol. The protein localises to the cell membrane. Functionally, promotes the cell surface stability of iRhom1/RHBDF1 and iRhom2/RHBDF2 and prevents their degradation via the endolysosomal pathway. By acting on iRhoms, involved in ADAM17-mediated shedding of TNF, amphiregulin/AREG, HBEGF and TGFA from the cell surface. Negatively regulates Wnt signaling, possibly by antagonizing the recruitment of AXIN1 to LRP6. This is FERM domain-containing protein 8 (Frmd8) from Mus musculus (Mouse).